A 657-amino-acid chain; its full sequence is Tyramine beta-hydroxylase (657 aa).

The helical transmembrane segment at 77–97 threads the bilayer; the sequence is VALLFLLVAYCGGVVHAGEIV. In terms of domain architecture, DOMON spans 103–214; the sequence is TNVTVKWHTD…GTTQFYIAAS (112 aa). Asn104 and Asn143 each carry an N-linked (GlcNAc...) asparagine glycan. Tyr278 is an active-site residue. Intrachain disulfides connect Cys280/Cys330 and Cys319/Cys342. Residues His312 and His313 each contribute to the Cu(2+) site. Residues His380, His458, His460, and Met533 each coordinate Cu(2+). 3 cysteine pairs are disulfide-bonded: Cys437-Cys549, Cys441-Cys606, and Cys512-Cys534. The active site involves His458. A glycan (N-linked (GlcNAc...) asparagine) is linked at Asn555.

Belongs to the copper type II ascorbate-dependent monooxygenase family. Requires Cu(2+) as cofactor. In terms of tissue distribution, present in synaptic regions of RIC interneurons. Present in gonadal sheath cells of hermaphrodites (at protein level).

The protein resides in the membrane. It catalyses the reaction tyramine + L-ascorbate + O2 = (R)-octopamine + L-dehydroascorbate + H2O. Required for the conversion of tyramine to octopamine, a precursor of octapamine but probably itself a neurotransmitter. Involved in the regulation of egg laying, which is inhibited by tyramine. Due to its involvement in octopamine biosynthesis, also required for crtc-1-dependent regulation of AMPK-mediated longevity. This is Tyramine beta-hydroxylase from Caenorhabditis elegans.